The sequence spans 105 residues: Guanyl-specific ribonuclease U1 (105 aa).

Q1 is modified (pyrrolidone carboxylic acid). Intrachain disulfides connect C8/C103 and C51/C87. H37 is a catalytic residue. Residue E57 is the Proton acceptor of the active site. The active-site Proton donor is H92.

The protein belongs to the ribonuclease N1/T1 family.

The catalysed reaction is [RNA] containing guanosine + H2O = an [RNA fragment]-3'-guanosine-3'-phosphate + a 5'-hydroxy-ribonucleotide-3'-[RNA fragment].. In Ustilago sphaerogena (Smut fungus), this protein is Guanyl-specific ribonuclease U1.